The primary structure comprises 485 residues: Fumarate hydratase, mitochondrial (485 aa).

A mitochondrion-targeting transit peptide spans Met-1–Asn-19. Substrate contacts are provided by residues Ser-118 to Thr-120, His-150 to Asp-153, Ser-160 to Asn-162, and Thr-208. His-209 acts as the Proton donor/acceptor in catalysis. Residue Ser-339 is part of the active site. Substrate-binding positions include Ser-340 and Lys-345–Asn-347.

The protein belongs to the class-II fumarase/aspartase family. Fumarase subfamily. Homotetramer.

It localises to the mitochondrion. It is found in the cytoplasm. It catalyses the reaction (S)-malate = fumarate + H2O. Its pathway is carbohydrate metabolism; tricarboxylic acid cycle; (S)-malate from fumarate: step 1/1. In terms of biological role, catalyzes the reversible stereospecific interconversion of fumarate to L-malate. Its function is as follows. Catalyzes the hydration of fumarate to L-malate in the tricarboxylic acid (TCA) cycle to facilitate a transition step in the production of energy in the form of NADH. This is Fumarate hydratase, mitochondrial from Dictyostelium discoideum (Social amoeba).